Consider the following 766-residue polypeptide: BMP/retinoic acid-inducible neural-specific protein 3 (766 aa).

Residues 1-33 (MIWRRRAGAELSSLMALWEWIVLSLHCWVLAVA) form the signal peptide. Residues 74 to 264 (RYKIYREFGR…FVQAALSYIA (191 aa)) enclose the MACPF domain. Asn-168, Asn-337, Asn-456, Asn-562, Asn-609, and Asn-641 each carry an N-linked (GlcNAc...) asparagine glycan.

It belongs to the BRINP family. In terms of tissue distribution, expressed in the brain. Weakly expressed in embryonic stem (ES) cells. Expressed in ES-derived neural stem cells (NSCs) and neuronal cells.

The protein resides in the secreted. It localises to the mitochondrion. Its function is as follows. Inhibits neuronal cell proliferation by negative regulation of the cell cycle transition. Promotes pituitary gonadotrope cell proliferation, migration and invasion, when overexpressed. May play a role in cell pituitary tumor development. This chain is BMP/retinoic acid-inducible neural-specific protein 3 (Brinp3), found in Mus musculus (Mouse).